The primary structure comprises 322 residues: Ferredoxin--NADP reductase (322 aa).

FAD contacts are provided by Thr12, Glu31, Gln39, Tyr44, Ala86, Phe119, and Thr317.

This sequence belongs to the ferredoxin--NADP reductase type 2 family. As to quaternary structure, homodimer. The cofactor is FAD.

The enzyme catalyses 2 reduced [2Fe-2S]-[ferredoxin] + NADP(+) + H(+) = 2 oxidized [2Fe-2S]-[ferredoxin] + NADPH. In Acholeplasma laidlawii (strain PG-8A), this protein is Ferredoxin--NADP reductase.